The chain runs to 84 residues: MADTGKGSSVAGCNDSCGCPSPCPGGNSCRCRMREASAGDQGHMVCPCGEHCGCNPCNCPKTQTQTSAKGCTCGEGCTCASCAT.

The interval 1–26 (MADTGKGSSVAGCNDSCGCPSPCPGG) is disordered.

This sequence belongs to the metallothionein superfamily. Type 15 family. As to expression, expressed specifically in seeds.

Its subcellular location is the cytoplasm. The protein localises to the nucleus. The protein resides in the cell membrane. Its function is as follows. Metallothioneins have a high content of cysteine residues that bind various heavy metals. Functions as a metal chelator of copper (Cu) and zinc (Zn). Plays a role in storing and distributing Zn ion in seed. The chain is Metallothionein-like protein 4A (MT4A) from Arabidopsis thaliana (Mouse-ear cress).